The primary structure comprises 366 residues: Mannonate dehydratase (366 aa).

Belongs to the mannonate dehydratase family. The cofactor is Fe(2+). It depends on Mn(2+) as a cofactor.

It catalyses the reaction D-mannonate = 2-dehydro-3-deoxy-D-gluconate + H2O. It participates in carbohydrate metabolism; pentose and glucuronate interconversion. Functionally, catalyzes the dehydration of D-mannonate. The chain is Mannonate dehydratase from Streptococcus suis (strain 98HAH33).